The sequence spans 742 residues: Polyphosphate kinase (742 aa).

N91 provides a ligand contact to ATP. Residues R431 and R461 each contribute to the Mg(2+) site. The Phosphohistidine intermediate role is filled by H491. Residues Y524, R624, and H652 each contribute to the ATP site. Residues 718–742 (WTASPQEGHSVRDHQESLMERHRSP) are disordered. Positions 726-742 (HSVRDHQESLMERHRSP) are enriched in basic and acidic residues.

Belongs to the polyphosphate kinase 1 (PPK1) family. Requires Mg(2+) as cofactor. In terms of processing, an intermediate of this reaction is the autophosphorylated ppk in which a phosphate is covalently linked to a histidine residue through a N-P bond.

It carries out the reaction [phosphate](n) + ATP = [phosphate](n+1) + ADP. Its function is as follows. Catalyzes the reversible transfer of the terminal phosphate of ATP to form a long-chain polyphosphate (polyP). The chain is Polyphosphate kinase from Mycobacterium bovis (strain ATCC BAA-935 / AF2122/97).